The chain runs to 1288 residues: Structural maintenance of chromosomes protein 4 (1288 aa).

The segment covering 1 to 10 has biased composition (polar residues); the sequence is MPRKGTQPST. The tract at residues 1 to 55 is disordered; that stretch reads MPRKGTQPSTARRREEGPPPPSPDGASSDAEPEPPSGRTESPATAAETASEELDN. S22 and S28 each carry phosphoserine. A Phosphothreonine modification is found at T39. Over residues 39-48 the composition is skewed to low complexity; it reads TESPATAAET. S41 and S50 each carry phosphoserine. Position 113–120 (113–120) interacts with ATP; it reads GPNGSGKS. Phosphoserine is present on S143. Residues 272–588 are a coiled coil; it reads RRVEILNEHR…LFQKVEEAKS (317 aa). K381 and K679 each carry N6-acetyllysine. Residues 613-727 form the SMC hinge domain; that stretch reads PGIYGRLGDL…ADNLDQATRV (115 aa). Residues 767-1020 adopt a coiled-coil conformation; the sequence is LVIEISEEEV…ALSIKLKLEQ (254 aa). Phosphoserine occurs at positions 982 and 1056. Positions 1109-1129 form a coiled coil; that stretch reads ELDKITYERDSFRQAYEDLRK.

This sequence belongs to the SMC family. SMC4 subfamily. As to quaternary structure, forms a heterodimer with SMC2. Component of the condensin complex, which contains the SMC2 and SMC4 heterodimer, and three non SMC subunits that probably regulate the complex: BRRN1/CAPH, CNAP1/CAPD2 and CAPG. Widely expressed. Higher expression in testis, colon, thymus.

The protein localises to the nucleus. It localises to the cytoplasm. Its subcellular location is the chromosome. Central component of the condensin complex, a complex required for conversion of interphase chromatin into mitotic-like condense chromosomes. The condensin complex probably introduces positive supercoils into relaxed DNA in the presence of type I topoisomerases and converts nicked DNA into positive knotted forms in the presence of type II topoisomerases. This chain is Structural maintenance of chromosomes protein 4 (SMC4), found in Homo sapiens (Human).